We begin with the raw amino-acid sequence, 124 residues long: UPF0292 protein AF_0905 (124 aa).

Positions Gly-21 to Ile-98 constitute a Toprim domain. Mg(2+) is bound by residues Glu-27, Asp-67, and Asp-69.

The protein belongs to the UPF0292 family. It depends on Mg(2+) as a cofactor.

The sequence is that of UPF0292 protein AF_0905 from Archaeoglobus fulgidus (strain ATCC 49558 / DSM 4304 / JCM 9628 / NBRC 100126 / VC-16).